The sequence spans 870 residues: Lon protease (870 aa).

The Lon N-terminal domain maps to 1 to 270 (MPTNSYRFLV…KLYEHIHTFA (270 aa)). 454-461 (GPPGTGKT) provides a ligand contact to ATP. Positions 691-870 (SPQIGTVTGL…YQQIYDFIFK (180 aa)) constitute a Lon proteolytic domain. Active-site residues include serine 777 and lysine 820.

This sequence belongs to the peptidase S16 family. As to quaternary structure, homohexamer. Organized in a ring with a central cavity.

The protein localises to the cytoplasm. The catalysed reaction is Hydrolysis of proteins in presence of ATP.. Functionally, ATP-dependent serine protease that mediates the selective degradation of mutant and abnormal proteins as well as certain short-lived regulatory proteins. Required for cellular homeostasis and for survival from DNA damage and developmental changes induced by stress. Degrades polypeptides processively to yield small peptide fragments that are 5 to 10 amino acids long. Binds to DNA in a double-stranded, site-specific manner. This chain is Lon protease, found in Mesomycoplasma hyopneumoniae (strain 232) (Mycoplasma hyopneumoniae).